A 472-amino-acid polypeptide reads, in one-letter code: Aspartyl/glutamyl-tRNA(Asn/Gln) amidotransferase subunit B (472 aa).

This sequence belongs to the GatB/GatE family. GatB subfamily. As to quaternary structure, heterotrimer of A, B and C subunits.

It carries out the reaction L-glutamyl-tRNA(Gln) + L-glutamine + ATP + H2O = L-glutaminyl-tRNA(Gln) + L-glutamate + ADP + phosphate + H(+). The enzyme catalyses L-aspartyl-tRNA(Asn) + L-glutamine + ATP + H2O = L-asparaginyl-tRNA(Asn) + L-glutamate + ADP + phosphate + 2 H(+). Allows the formation of correctly charged Asn-tRNA(Asn) or Gln-tRNA(Gln) through the transamidation of misacylated Asp-tRNA(Asn) or Glu-tRNA(Gln) in organisms which lack either or both of asparaginyl-tRNA or glutaminyl-tRNA synthetases. The reaction takes place in the presence of glutamine and ATP through an activated phospho-Asp-tRNA(Asn) or phospho-Glu-tRNA(Gln). The chain is Aspartyl/glutamyl-tRNA(Asn/Gln) amidotransferase subunit B from Elusimicrobium minutum (strain Pei191).